The sequence spans 184 residues: Guanylate kinase (184 aa).

The Guanylate kinase-like domain occupies 4-182 (MGLTVLSGPS…AAARLVALMI (179 aa)). ATP is bound at residue 11-18 (GPSGVGKD).

This sequence belongs to the guanylate kinase family.

It is found in the cytoplasm. The catalysed reaction is GMP + ATP = GDP + ADP. Essential for recycling GMP and indirectly, cGMP. The protein is Guanylate kinase of Frankia casuarinae (strain DSM 45818 / CECT 9043 / HFP020203 / CcI3).